We begin with the raw amino-acid sequence, 91 residues long: Potassium channel toxin TdiKIK (91 aa).

The signal sequence occupies residues Met-1–Ala-25. The propeptide occupies Gly-26–Glu-44. Residues Glu-58–Ser-91 form the BetaSPN-type CS-alpha/beta domain. Intrachain disulfides connect Cys-61/Cys-81, Cys-68/Cys-86, and Cys-72/Cys-88.

Expressed by the venom gland.

The protein resides in the secreted. In terms of biological role, the full peptide presents antibacterial and cytotoxic activities. The synthetic C-terminus (AA 33-76) inhibits voltage-gated potassium channels Kv1.1/KCNA1, Kv1.2/KCNA2, and Kv1.3/KCNA3. The chain is Potassium channel toxin TdiKIK from Tityus discrepans (Venezuelan scorpion).